We begin with the raw amino-acid sequence, 456 residues long: Bifunctional protein GlmU (456 aa).

The segment at 1–230 is pyrophosphorylase; it reads MDKRFAVVLA…FQETLGVNDR (230 aa). Residues 9–12, Lys23, Gln73, and 78–79 each bind UDP-N-acetyl-alpha-D-glucosamine; these read LAAG and GT. Asp103 contacts Mg(2+). UDP-N-acetyl-alpha-D-glucosamine-binding residues include Gly140, Glu155, Asn170, and Asn228. Residue Asn228 participates in Mg(2+) binding. The interval 231–251 is linker; it reads VALSQAEQFMKERINKRHMQN. Residues 252 to 456 are N-acetyltransferase; it reads GVTLIDPMNT…DDYVKNIHKK (205 aa). Arg333 and Lys351 together coordinate UDP-N-acetyl-alpha-D-glucosamine. The active-site Proton acceptor is His363. UDP-N-acetyl-alpha-D-glucosamine is bound by residues Tyr366 and Asn377. Acetyl-CoA contacts are provided by residues 386-387, Ala423, and Arg440; that span reads NY.

It in the N-terminal section; belongs to the N-acetylglucosamine-1-phosphate uridyltransferase family. This sequence in the C-terminal section; belongs to the transferase hexapeptide repeat family. In terms of assembly, homotrimer. The cofactor is Mg(2+).

The protein resides in the cytoplasm. The enzyme catalyses alpha-D-glucosamine 1-phosphate + acetyl-CoA = N-acetyl-alpha-D-glucosamine 1-phosphate + CoA + H(+). It carries out the reaction N-acetyl-alpha-D-glucosamine 1-phosphate + UTP + H(+) = UDP-N-acetyl-alpha-D-glucosamine + diphosphate. The protein operates within nucleotide-sugar biosynthesis; UDP-N-acetyl-alpha-D-glucosamine biosynthesis; N-acetyl-alpha-D-glucosamine 1-phosphate from alpha-D-glucosamine 6-phosphate (route II): step 2/2. It participates in nucleotide-sugar biosynthesis; UDP-N-acetyl-alpha-D-glucosamine biosynthesis; UDP-N-acetyl-alpha-D-glucosamine from N-acetyl-alpha-D-glucosamine 1-phosphate: step 1/1. It functions in the pathway bacterial outer membrane biogenesis; LPS lipid A biosynthesis. In terms of biological role, catalyzes the last two sequential reactions in the de novo biosynthetic pathway for UDP-N-acetylglucosamine (UDP-GlcNAc). The C-terminal domain catalyzes the transfer of acetyl group from acetyl coenzyme A to glucosamine-1-phosphate (GlcN-1-P) to produce N-acetylglucosamine-1-phosphate (GlcNAc-1-P), which is converted into UDP-GlcNAc by the transfer of uridine 5-monophosphate (from uridine 5-triphosphate), a reaction catalyzed by the N-terminal domain. This Bacillus subtilis (strain 168) protein is Bifunctional protein GlmU.